A 120-amino-acid polypeptide reads, in one-letter code: Large ribosomal subunit protein uL18 (120 aa).

In terms of assembly, part of the 50S ribosomal subunit; part of the 5S rRNA/L5/L18/L25 subcomplex. Contacts the 5S and 23S rRNAs.

Its function is as follows. This is one of the proteins that bind and probably mediate the attachment of the 5S RNA into the large ribosomal subunit, where it forms part of the central protuberance. This chain is Large ribosomal subunit protein uL18, found in Rhodopseudomonas palustris (strain ATCC BAA-98 / CGA009).